Consider the following 89-residue polypeptide: Small ribosomal subunit protein uS15c (89 aa).

Belongs to the universal ribosomal protein uS15 family. In terms of assembly, part of the 30S ribosomal subunit.

Its subcellular location is the plastid. It is found in the organellar chromatophore. This chain is Small ribosomal subunit protein uS15c (rps15), found in Paulinella chromatophora.